We begin with the raw amino-acid sequence, 323 residues long: tRNA dimethylallyltransferase (323 aa).

12–19 (GPTAAGKT) contributes to the ATP binding site. 14–19 (TAAGKT) provides a ligand contact to substrate. Interaction with substrate tRNA regions lie at residues 37 to 40 (DSAL) and 161 to 165 (QRLMR).

The protein belongs to the IPP transferase family. As to quaternary structure, monomer. It depends on Mg(2+) as a cofactor.

It catalyses the reaction adenosine(37) in tRNA + dimethylallyl diphosphate = N(6)-dimethylallyladenosine(37) in tRNA + diphosphate. Its function is as follows. Catalyzes the transfer of a dimethylallyl group onto the adenine at position 37 in tRNAs that read codons beginning with uridine, leading to the formation of N6-(dimethylallyl)adenosine (i(6)A). The sequence is that of tRNA dimethylallyltransferase from Pseudomonas aeruginosa (strain LESB58).